We begin with the raw amino-acid sequence, 96 residues long: Large ribosomal subunit protein uL23 (96 aa).

It belongs to the universal ribosomal protein uL23 family. As to quaternary structure, part of the 50S ribosomal subunit. Contacts protein L29, and trigger factor when it is bound to the ribosome.

Its function is as follows. One of the early assembly proteins it binds 23S rRNA. One of the proteins that surrounds the polypeptide exit tunnel on the outside of the ribosome. Forms the main docking site for trigger factor binding to the ribosome. The polypeptide is Large ribosomal subunit protein uL23 (Onion yellows phytoplasma (strain OY-M)).